We begin with the raw amino-acid sequence, 89 residues long: MALTSEQKKEILSSYGLHATDTGSPEAQIALLTKRIADLTEHLKVHKHDHHSRRGLLLLVGRRRRLIKYLSLIDVQRYRSLIERLGLRR.

It belongs to the universal ribosomal protein uS15 family. In terms of assembly, part of the 30S ribosomal subunit. Forms a bridge to the 50S subunit in the 70S ribosome, contacting the 23S rRNA.

One of the primary rRNA binding proteins, it binds directly to 16S rRNA where it helps nucleate assembly of the platform of the 30S subunit by binding and bridging several RNA helices of the 16S rRNA. In terms of biological role, forms an intersubunit bridge (bridge B4) with the 23S rRNA of the 50S subunit in the ribosome. This Mycobacterium leprae (strain Br4923) protein is Small ribosomal subunit protein uS15.